The sequence spans 90 residues: N(2)-fixation sustaining protein CowN (90 aa).

Belongs to the CowN family.

Functionally, is required to sustain N(2)-dependent growth in the presence of low levels of carbon monoxide (CO). Probably acts by protecting the N(2) fixation ability of the nitrogenase complex, which is inactivated in the presence of CO. The chain is N(2)-fixation sustaining protein CowN from Halorhodospira halophila (strain DSM 244 / SL1) (Ectothiorhodospira halophila (strain DSM 244 / SL1)).